Reading from the N-terminus, the 3371-residue chain is MSPCGRKMGEGRQQRRAPVGKLLLLPGRRDTPHGRSGSSGARTQRSLLWLLVHVWLWAASGSSAQLFNLTLSVDEGLPPDTLVGDIRAGLPAAQQQEGSGFFLSEDSDDSPLLDDFHVHPDTGIIRTARRLDRERRDHYSFVAATLLGAVVQVEIRVNDVNDHSPRFPLDSLQLDVSELSPPGTAFRLPVAHDPDAGLFSTQGYTLVQPSDLPKDPAGPFFQLRYRTPGPLPSPLLPGSSSPLEPLDLVLLRRLDREEAAAHRLQIEAWDGGRPRRTGLLSVELRVLDENDNPPVFEQDEYRAAVREDAQPGAEVCRVRATDRDLGPNGFVRYSVRARQVPGAGSGGGALGDAAYFAVEELSGVVRVWRPLDREAQAWHQLVVEARDGGAEPEVATVRVSIAVLDVNDNRPAIHVLFLTEGGVARVSEGARPGDYVARVSVSDADGDWEKEDEATGELGVGLGDGSISLSLEGGEGDFALLPGGPPGVFFLCVEGPLDRESRDLYELLLVATDAGSPPLSTEETLLLRVADLNDQPPLFSQQHYKASVSEAAAPGTVVMWVSASDADEAGSDHAWLRYTVVQLSAPCNLGSLQSKMVHTAECGPSFAIDSESGAISTIRTLDREVQEAVELKVVAQDLGEPPLSATCLVSITVDDVNDNEPIFWRQVYNATIAEHAPVGHCFLQVTASDADSGLYGFIEYSLYDGFLSYEAPQAFRIDPHDGQICVSQDIDRERDPATYDLLVEAKDGGGLSAQAFVRVDLEDVNDNHPVFNPSTYVTSISDETQPGTEIINVLATDQDSGIYGTVAYELIPGNVSSLFTIDSTTGIIYLTLPLSHLESTTLSLMVSAQDGGGLTAVINADVTIHIFQTTLAPAEFERPKYTFLVYEDVPEDSPIGTVKAREPLNSSEPIFYRISSGDLGGKFSIHPRLGTIRTRKPLDHETQPVVVLTVQAQLGSAPACSSTEVNITVMDVNDNHPAFLRTSDEIRISQTTPPGTALYLARAEDRDSGRNGLIRYSIASPQPGVFAIDRALGVLFLNGSLGAGEQRELTLTLRAEDQGVHPQAALLVLTVVIEKREHSPSWTFEHLVYQVEVSESLSPMTQMLQTQAHPLGPQRAASPLRYSLEPSVDSAMFGIRPYTGWIYLRRQFDYESTQTYNFRVFAWIPEDGFLQNVSTTVIVRVWDENDNSPTFLHDVLFLKVEESPVPQGVIGKITAIDMDSGKNGQLLYFLLSDGKFFKMNPNTGELINWVALDREHRGHHEMTVLVTDRGSPPRNATMAVYVSVTDINDNRPFFPQCLPGKELHVKVLEGQPVNMLVTTVFAKDPDEGNNAEVTYSVSSEDSSDHFKIDANNGEIRTTTILSYDYRPSYRMSVIATDQGVPPLQGQAVVNIQVIPLSKGRAIMSQNIRHLIIPENLKPTKIMSLIKSSDHLQQHYNGKLHFSIVADDKDGHFEIDSSTGDLFLSKELDYETTSHYLFRVITTDHSKNLSLSSTVFLSIDVEDQNDHSPSFQDELIVISVEENVPIGTLVYVFNAKDDDGSFLNSRIQYYIESHNPGTNPFLIHPSFGTLVTVSRLDRESIPTVILTVTASDQAVNVTDRRLRSLTAQIVILDVNDHNPTFISFPNAHVKEDVTVGSLVHHITAHDPDEGRNGKVTYSILSGNENMTFMLDESSGLLTTTCPLDYEMKTQHILTVLALDDGTPALSSSQTLTVTVLDVNDEAPVFKQHLYEASVKENQNPGEFVTRVEALDRDSGVNSKLQFEIMPGASFELFEINSDTGEVVTTTILDREIQEVFTLRVLVRDGGFPSLSSTTTILCTVEDENDHAPEFIVSSYDIEVLENQEPEVVYTVLASDMDAGNNRAVEYHIIDGNTDECFTINEMSGELSTTRALDREQISNFTLVILCSDLGDPPRSSVIHLQVRVLDANDHSPSFPTLYYQSSVREDAEVGTVVLVLSAVDKDEGLNGQTEYFLTDEASGAFTIDPMSGTLKTSNTLDREARSQHTFSAVARDCSIQGSRSTTVIIKVYVTDVNDNDPVLEQNPFDVFLSPESPTNQTTVIVRADDLDLGPNGTVVFSFAETQSMFSIDKYTGEIQFQQNPSSEYFPIWLQLKVTDQGIPARTTTGLLVIHMEGEDVKISFSHHLYKGLVTENCEAGTSIVTVKAFAPDSIQDSMKYSIFSGNEDGVLSLCSKSGQLTVKEPKFLDFEVRNEVQLIVLAESSGHRAYCKVAVLIQDENDNSPCFEQSIYQASVSESQLYNAHVIQVFATDLDSGLNGLIEYSILSGNQEEAFQIDALSGVITTKAILDYELTSSYSLIVQATDKGMPRLSNTTVIKVQVTDINDNAPAFLPSEAVEITEDSLPGVIVTHVSVHDVDLNSAFIFSFAKESNPGTKFAIDQNTGVVVLVKTLDFEEMTEYELLIQISDSVHYTEGALVVRVLDVNDNPPVFSQDFYQVTVPESIPVGYSVLTLSATDLESNENISYRILSSSKEFSIDPKNGTIFTISPVLLLDTISTTQFLVEASDGGNPDLRALTLVEIGIEDMNNYAPEFTVKSYNLSLSEDALVGSTLVTFSNIDHDWTRENTYVEYSIISGNSQNNFHVETKFFHSEYPYKQVGYLVLLHSLDREASASHELVILASDSGCPPLSSTAVISIQVLDVNDNPPNFSSLSYHTHVKESTPLGSHITVVSANDRDTGSHAEIIYNIISGNEKGHFYLEENTGVLYLIKPLDYEKMTKFTLTVQASDAEKKHFSFAVVFVSVLDDNDHAPQFMFSSFSCIVPENLPISSTICSINALDFDAGPYGELTYSIVSPCFLTHGMSYDHDLFLIDPLTGDIHAKQILDYENGNKYCLTVQAKDKGDATASLVVWVDIEGIDEFEPIFTQDQYFFTLPEKNKDRQLIGRVEASDADAGIDGVILYSLGTSSPFFSVNKTNGNIYLIRALPLIKSQLNKEDTLEMKIIAHSPKSDSKFASCTVFVNVSFSSEGTPLAVFASSFSISLVVSFLVFLILICILIVMILRHKQKDTINNYEEKKTSSLDADLRVTRDASVLKAFQKTDDCSNEVVPVDATPEWLSLISIMEKDIVNLYRHSNSSGHCSVEGETAEDKEIQRINEHPYRKCSDSALSDHESRVPDSGIPRDSDQLSCLSGETDVMVTAETAEASQTFGEGDQGEGCSTTCAQNNVLPQTVQKREAKESILADVRKESVFISGDQEVRCAALSTQTTSDHDGKDNYHWNYLLSWEPKFQPLASVFNDIAKLKDEHLHMPGIPKEKKSFVFPPPLITAVAQPGIKAVPPRMPAVNLGQVPPKHPRSPIPYHLGSLPEGMTPNFSPSLSLLTMQPPALSPLLREGELLGTHISGTCHELKAEDEVQI.

The segment at 1–40 (MSPCGRKMGEGRQQRRAPVGKLLLLPGRRDTPHGRSGSSG) is disordered. The Cytoplasmic portion of the chain corresponds to 1-46 (MSPCGRKMGEGRQQRRAPVGKLLLLPGRRDTPHGRSGSSGARTQRS). Residues 47 to 67 (LLWLLVHVWLWAASGSSAQLF) traverse the membrane as a helical segment. Cadherin domains are found at residues 65–167 (QLFN…SPRF), 168–296 (PLDS…PPVF), 297–413 (EQDE…RPAI), 424–539 (ARVS…PPLF), 540–663 (SQQH…EPIF), 664–771 (WRQV…HPVF), 772–881 (NPST…RPKY), 877–979 (ERPK…HPAF), 980–1082 (LRTS…SPSW), 1085–1191 (EHLV…SPTF), 1192–1294 (LHDV…RPFF), 1299–1415 (PGKE…IPEN), 1404–1510 (SQNI…SPSF), 1511–1620 (QDEL…NPTF), 1620–1724 (FISF…APVF), 1725–1829 (KQHL…APEF), 1830–1933 (IVSS…SPSF), 1934–2038 (PTLY…DPVL), 2039–2130 (EQNP…VIHM), 2140–2242 (SHHL…SPCF), 2243–2347 (EQSI…APAF), 2347–2447 (FLPS…PPVF), 2448–2549 (SQDF…APEF), 2550–2665 (TVKS…PPNF), 2666–2769 (SSLS…APQF), 2770–2880 (MFSS…EPIF), and 2881–2988 (TQDQ…TPLA). At 68–2986 (NLTLSVDEGL…NVSFSSEGTP (2919 aa)) the chain is on the extracellular side. Asn669, Asn772, Asn814, Asn905, Asn966, Asn1038, Asn1172, and Asn1275 each carry an N-linked (GlcNAc...) asparagine glycan. Residues Asn1487, Asn1595, Asn1617, and Asn1664 are each glycosylated (N-linked (GlcNAc...) asparagine). N-linked (GlcNAc...) asparagine glycosylation occurs at Asn1898. Asn2054, Asn2070, and Asn2098 each carry an N-linked (GlcNAc...) asparagine glycan. N-linked (GlcNAc...) asparagine glycosylation occurs at Asn2329. N-linked (GlcNAc...) asparagine glycosylation is found at Asn2479, Asn2497, Asn2555, and Asn2664. N-linked (GlcNAc...) asparagine glycosylation is found at Asn2929 and Asn2977. The helical transmembrane segment at 2987–3017 (LAVFASSFSISLVVSFLVFLILICILIVMIL) threads the bilayer. The Cytoplasmic portion of the chain corresponds to 3018-3371 (RHKQKDTINN…ELKAEDEVQI (354 aa)). The span at 3117–3140 (KCSDSALSDHESRVPDSGIPRDSD) shows a compositional bias: basic and acidic residues. Residues 3117–3141 (KCSDSALSDHESRVPDSGIPRDSDQ) are disordered.

As to expression, cerebral cortex and testis.

The protein localises to the membrane. Calcium-dependent cell-adhesion protein. This Homo sapiens (Human) protein is Protocadherin-23 (DCHS2).